The following is a 349-amino-acid chain: Magnesium-protoporphyrin IX monomethyl ester [oxidative] cyclase (349 aa).

A compositionally biased stretch (low complexity) spans Met-1–Thr-10. The tract at residues Met-1–Leu-23 is disordered.

This sequence belongs to the AcsF family. It depends on Fe cation as a cofactor.

The catalysed reaction is Mg-protoporphyrin IX 13-monomethyl ester + 3 NADPH + 3 O2 + 2 H(+) = 3,8-divinyl protochlorophyllide a + 3 NADP(+) + 5 H2O. It functions in the pathway porphyrin-containing compound metabolism; chlorophyll biosynthesis (light-independent). In terms of biological role, catalyzes the formation of the isocyclic ring in chlorophyll biosynthesis. Mediates the cyclase reaction, which results in the formation of divinylprotochlorophyllide (Pchlide) characteristic of all chlorophylls from magnesium-protoporphyrin IX 13-monomethyl ester (MgPMME). The chain is Magnesium-protoporphyrin IX monomethyl ester [oxidative] cyclase from Prochlorococcus marinus (strain MIT 9313).